Reading from the N-terminus, the 330-residue chain is Tetraacyldisaccharide 4'-kinase (330 aa).

An ATP-binding site is contributed by 58–65 (TVGGSGKT).

Belongs to the LpxK family.

The enzyme catalyses a lipid A disaccharide + ATP = a lipid IVA + ADP + H(+). It functions in the pathway glycolipid biosynthesis; lipid IV(A) biosynthesis; lipid IV(A) from (3R)-3-hydroxytetradecanoyl-[acyl-carrier-protein] and UDP-N-acetyl-alpha-D-glucosamine: step 6/6. Functionally, transfers the gamma-phosphate of ATP to the 4'-position of a tetraacyldisaccharide 1-phosphate intermediate (termed DS-1-P) to form tetraacyldisaccharide 1,4'-bis-phosphate (lipid IVA). The polypeptide is Tetraacyldisaccharide 4'-kinase (Shewanella halifaxensis (strain HAW-EB4)).